Here is a 150-residue protein sequence, read N- to C-terminus: 3-hydroxyacyl-[acyl-carrier-protein] dehydratase FabZ (150 aa).

Residue His-54 is part of the active site.

This sequence belongs to the thioester dehydratase family. FabZ subfamily.

It localises to the cytoplasm. It carries out the reaction a (3R)-hydroxyacyl-[ACP] = a (2E)-enoyl-[ACP] + H2O. In terms of biological role, involved in unsaturated fatty acids biosynthesis. Catalyzes the dehydration of short chain beta-hydroxyacyl-ACPs and long chain saturated and unsaturated beta-hydroxyacyl-ACPs. The chain is 3-hydroxyacyl-[acyl-carrier-protein] dehydratase FabZ from Vibrio atlanticus (strain LGP32) (Vibrio splendidus (strain Mel32)).